A 384-amino-acid chain; its full sequence is Cytochrome b (384 aa).

The next 4 helical transmembrane spans lie at 32–52 (FGSLLGLCLAMQIVTGCFLSM), 75–96 (FLLRYFHANGASLFFLCLYFHI), 111–131 (WRVGIVIFLLTMATAFLGYVL), and 176–196 (FFSLHFLFPFILAILVVVHLI). Residues His-81 and His-95 each coordinate heme b. Residues His-180 and His-194 each contribute to the heme b site. An a ubiquinone-binding site is contributed by His-199. The next 4 membrane-spanning stretches (helical) occupy residues 224–244 (SKDWYGIVVTLMLLSIVVYLM), 286–306 (FGGVVSMFLSILILFFFPLLH), 318–338 (FGRMAFWSFVVNFVLLTWIGS), and 345–366 (FIIIGQLVALYYFFYFLILIPL).

The protein belongs to the cytochrome b family. In terms of assembly, the main subunits of complex b-c1 are: cytochrome b, cytochrome c1 and the Rieske protein. The cofactor is heme b.

It is found in the mitochondrion inner membrane. Its function is as follows. Component of the ubiquinol-cytochrome c reductase complex (complex III or cytochrome b-c1 complex) that is part of the mitochondrial respiratory chain. The b-c1 complex mediates electron transfer from ubiquinol to cytochrome c. Contributes to the generation of a proton gradient across the mitochondrial membrane that is then used for ATP synthesis. In Acropora tenuis (Purple tipped acropora), this protein is Cytochrome b (MT-CYB).